We begin with the raw amino-acid sequence, 225 residues long: Methylthioribulose-1-phosphate dehydratase (225 aa).

Zn(2+) contacts are provided by His106 and His108.

This sequence belongs to the aldolase class II family. MtnB subfamily. Zn(2+) is required as a cofactor.

It carries out the reaction 5-(methylsulfanyl)-D-ribulose 1-phosphate = 5-methylsulfanyl-2,3-dioxopentyl phosphate + H2O. Its pathway is amino-acid biosynthesis; L-methionine biosynthesis via salvage pathway; L-methionine from S-methyl-5-thio-alpha-D-ribose 1-phosphate: step 2/6. In terms of biological role, catalyzes the dehydration of methylthioribulose-1-phosphate (MTRu-1-P) into 2,3-diketo-5-methylthiopentyl-1-phosphate (DK-MTP-1-P). The sequence is that of Methylthioribulose-1-phosphate dehydratase from Xanthomonas oryzae pv. oryzae (strain PXO99A).